The sequence spans 588 residues: Outer membrane transporter CdiB (588 aa).

Positions 104–179 (FTVSSIVVSG…GVLHITVMEG (76 aa)) constitute a POTRA domain.

The protein belongs to the TPS (TC 1.B.20) family.

The protein resides in the cell outer membrane. Potential outer membrane protein component of a toxin-immunity protein module, which functions as a cellular contact-dependent growth inhibition (CDI) system. CDI modules allow bacteria to communicate with and inhibit the growth of closely related neighboring bacteria in a contact-dependent fashion. This protein may be required for secretion and assembly of the CdiA toxin protein. Inhibitory cells must be in logarithmic (not stationary) phase to inhibit growth of their targets, while the presence of P or S but not type 1 pili protects the target cells against growth inhibition. In terms of biological role, probable member of a two partner secretion pathway (TPS) in which it mediates the secretion of CdiA. This Escherichia coli protein is Outer membrane transporter CdiB.